We begin with the raw amino-acid sequence, 350 residues long: Transmembrane protein 185B (350 aa).

The next 7 membrane-spanning stretches (helical) occupy residues 16–36 (LIYA…DGII), 41–61 (WAVF…ASVG), 81–101 (FKAM…EILV), 111–131 (FWLL…AACV), 168–188 (WLVV…VVLY), 211–231 (VTMA…EVLL), and 240–260 (TFSY…LMAT).

It belongs to the TMEM185 family.

Its subcellular location is the membrane. The polypeptide is Transmembrane protein 185B (Tmem185b) (Mus musculus (Mouse)).